A 428-amino-acid chain; its full sequence is Synaptotagmin-1 (428 aa).

Over 1–67 (MDSLLARVKR…KDKLINEIEN (67 aa)) the chain is Vesicular. Residues 16 to 50 (ALNPAQEGVTGGPDAAGLPDVSTSSPGGGGAGDKL) form a disordered region. Residues 68–92 (LPIWAIVLIIAGSLLFLVCCVYCVC) traverse the membrane as a helical segment. Over 93–428 (RRSCRKRKKK…HTLQEVPEKN (336 aa)) the chain is Cytoplasmic. A Phosphoserine; by PRKC2 modification is found at Ser123. The segment at 147–395 (STKSEVKLGK…PIGRCVLGCN (249 aa)) is phospholipid binding. C2 domains follow at residues 153–272 (KLGK…EDWK) and 286–419 (KLGD…AQWH). Ca(2+)-binding residues include Asp184, Asp190, Asp242, Phe243, Asp244, Ser247, Lys248, Asp250, Asp317, Asp323, Asp377, and Asp379.

Belongs to the synaptotagmin family. In terms of assembly, binds SNAP25. Isoform 3 binds SNAP25 with higher affinity. The cofactor is Ca(2+).

It is found in the cytoplasmic vesicle. The protein resides in the secretory vesicle. It localises to the synaptic vesicle membrane. Its subcellular location is the synapse. Acts as inhibitor of neurotransmitter release. Overexpression leads to a decrease in the amplitude of the excitatory postsynaptic potential in dissected cholinergic and glutaminergic neurons while depletion with antisense oligonucleotides leads to an increase. Overexpression of isoform 1 blocks the reversal of synaptic depression by serotonin in sensory neurons. The chain is Synaptotagmin-1 (SYT1) from Aplysia californica (California sea hare).